A 389-amino-acid polypeptide reads, in one-letter code: UDP-N-acetylglucosamine--N-acetylmuramyl-(pentapeptide) pyrophosphoryl-undecaprenol N-acetylglucosamine transferase (389 aa).

UDP-N-acetyl-alpha-D-glucosamine contacts are provided by residues 39-41 (TGG), Asn-157, Arg-193, Ser-221, Ile-275, 294-299 (ALTVSE), and Gln-320.

This sequence belongs to the glycosyltransferase 28 family. MurG subfamily.

The protein resides in the cell inner membrane. It catalyses the reaction di-trans,octa-cis-undecaprenyl diphospho-N-acetyl-alpha-D-muramoyl-L-alanyl-D-glutamyl-meso-2,6-diaminopimeloyl-D-alanyl-D-alanine + UDP-N-acetyl-alpha-D-glucosamine = di-trans,octa-cis-undecaprenyl diphospho-[N-acetyl-alpha-D-glucosaminyl-(1-&gt;4)]-N-acetyl-alpha-D-muramoyl-L-alanyl-D-glutamyl-meso-2,6-diaminopimeloyl-D-alanyl-D-alanine + UDP + H(+). It participates in cell wall biogenesis; peptidoglycan biosynthesis. Cell wall formation. Catalyzes the transfer of a GlcNAc subunit on undecaprenyl-pyrophosphoryl-MurNAc-pentapeptide (lipid intermediate I) to form undecaprenyl-pyrophosphoryl-MurNAc-(pentapeptide)GlcNAc (lipid intermediate II). The polypeptide is UDP-N-acetylglucosamine--N-acetylmuramyl-(pentapeptide) pyrophosphoryl-undecaprenol N-acetylglucosamine transferase (Saccharophagus degradans (strain 2-40 / ATCC 43961 / DSM 17024)).